Consider the following 375-residue polypeptide: Tyrosine--tRNA ligase (375 aa).

L-tyrosine is bound by residues tyrosine 37, tyrosine 168, glutamine 172, aspartate 175, and glutamine 190. Positions 251-255 match the 'KMSKS' region motif; that stretch reads KMSKS. Residue lysine 254 participates in ATP binding.

Belongs to the class-I aminoacyl-tRNA synthetase family. TyrS type 4 subfamily. As to quaternary structure, homodimer.

The protein resides in the cytoplasm. The enzyme catalyses tRNA(Tyr) + L-tyrosine + ATP = L-tyrosyl-tRNA(Tyr) + AMP + diphosphate + H(+). Catalyzes the attachment of tyrosine to tRNA(Tyr) in a two-step reaction: tyrosine is first activated by ATP to form Tyr-AMP and then transferred to the acceptor end of tRNA(Tyr). The protein is Tyrosine--tRNA ligase of Thermococcus kodakarensis (strain ATCC BAA-918 / JCM 12380 / KOD1) (Pyrococcus kodakaraensis (strain KOD1)).